The following is a 200-amino-acid chain: Small ribosomal subunit protein uS4 (200 aa).

Residues 20–41 are disordered; that stretch reads SGTGKELEKRPYAPGQHGPNQR. The S4 RNA-binding domain maps to 92 to 155; sequence ARLDAVVYSL…LKLDIIAESV (64 aa).

Belongs to the universal ribosomal protein uS4 family. As to quaternary structure, part of the 30S ribosomal subunit. Contacts protein S5. The interaction surface between S4 and S5 is involved in control of translational fidelity.

Functionally, one of the primary rRNA binding proteins, it binds directly to 16S rRNA where it nucleates assembly of the body of the 30S subunit. In terms of biological role, with S5 and S12 plays an important role in translational accuracy. The chain is Small ribosomal subunit protein uS4 from Staphylococcus saprophyticus subsp. saprophyticus (strain ATCC 15305 / DSM 20229 / NCIMB 8711 / NCTC 7292 / S-41).